The following is a 164-amino-acid chain: Neurotrophin-3 (164 aa).

The signal sequence occupies residues 1-3 (IQS). Residues 4-120 (TNMDQQGSLT…ALNRTSRRKR (117 aa)) constitute a propeptide that is removed on maturation. Asn-113 carries an N-linked (GlcNAc...) asparagine glycan.

It belongs to the NGF-beta family.

It is found in the secreted. Its function is as follows. Seems to promote the survival of visceral and proprioceptive sensory neurons. The polypeptide is Neurotrophin-3 (NTF3) (Sanzinia madagascariensis (Madagascar tree boa)).